The sequence spans 216 residues: Transmembrane emp24 domain-containing protein eca (216 aa).

Positions 1–20 (MRDQFISLALILCVLHSACG) are cleaved as a signal peptide. Over 21-182 (LYFHISETER…FRHTSESTNS (162 aa)) the chain is Lumenal. One can recognise a GOLD domain in the interval 30-126 (RKCFIEEVPD…QLRVHLDIQV (97 aa)). Residues 134–164 (ANVAQKEKLTELQLRIRQLLDQVEQITKEQN) are a coiled coil. The helical transmembrane segment at 183 to 203 (RVLWWSLAQTIVLVCMGFWQM) threads the bilayer. The Cytoplasmic segment spans residues 204 to 216 (RHLKSFFEAKKLV). Positions 213 to 216 (KKLV) match the Prevents secretion from ER motif.

It belongs to the EMP24/GP25L family.

The protein resides in the endoplasmic reticulum membrane. Functionally, eca and bai are essential, though not redundant, for dorsoventral patterning of the embryo. Specifically required during early embryogenesis for the activity of maternal tkv, while the zygotic tkv is not affected. Involved in Golgi organization. This Drosophila sechellia (Fruit fly) protein is Transmembrane emp24 domain-containing protein eca.